Reading from the N-terminus, the 338-residue chain is Oxygen-dependent coproporphyrinogen-III oxidase (338 aa).

S104 is a binding site for substrate. Residues H108 and H118 each contribute to the a divalent metal cation site. H118 acts as the Proton donor in catalysis. 120–122 (NYR) serves as a coordination point for substrate. H152 and H182 together coordinate a divalent metal cation. The tract at residues 274–309 (YVEFNLVYDRGTIFGLQTNGRTESILMSLPPLVRWE) is important for dimerization.

Belongs to the aerobic coproporphyrinogen-III oxidase family. In terms of assembly, homodimer. The cofactor is a divalent metal cation.

The protein localises to the cytoplasm. It carries out the reaction coproporphyrinogen III + O2 + 2 H(+) = protoporphyrinogen IX + 2 CO2 + 2 H2O. The protein operates within porphyrin-containing compound metabolism; protoporphyrin-IX biosynthesis; protoporphyrinogen-IX from coproporphyrinogen-III (O2 route): step 1/1. In terms of biological role, involved in the heme and chlorophyll biosynthesis. Catalyzes the aerobic oxidative decarboxylation of propionate groups of rings A and B of coproporphyrinogen-III to yield the vinyl groups in protoporphyrinogen-IX. The chain is Oxygen-dependent coproporphyrinogen-III oxidase from Thermosynechococcus vestitus (strain NIES-2133 / IAM M-273 / BP-1).